The following is a 527-amino-acid chain: UvrABC system protein C (527 aa).

Positions 9–87 constitute a GIY-YIG domain; that stretch reads KNPGCYIYKN…IKKYSPKYNI (79 aa). Residues 191–226 enclose the UVR domain; sequence DSLIHELKNEMNEKSKNLQFEEALLIREEINAIERL.

It belongs to the UvrC family. Interacts with UvrB in an incision complex.

The protein localises to the cytoplasm. In terms of biological role, the UvrABC repair system catalyzes the recognition and processing of DNA lesions. UvrC both incises the 5' and 3' sides of the lesion. The N-terminal half is responsible for the 3' incision and the C-terminal half is responsible for the 5' incision. The polypeptide is UvrABC system protein C (Methanococcus maripaludis (strain DSM 14266 / JCM 13030 / NBRC 101832 / S2 / LL)).